A 226-amino-acid chain; its full sequence is MTDSTAIALLSGGLDSATAAALAIKSGFRVIGLSFDYGQRHRRELDAAVEIAKALNLAEHHTINVDLAMWGGSSLTDHAQTLPTSGVETSIIPNTYVPGRNTVFIAIGLSLAEARGADRLVLGVNAVDYSGYPDCRPDYLEAFQDLADLSSRAGREGHGPKLWAPLVEWSKQQIAEEALHLGIPIERTWSCYSGGDVPCGVCDSCRIRDEALLAAGRPDLCSPGRP.

Position 10–20 (10–20 (LSGGLDSATAA)) interacts with ATP. Cysteine 191, cysteine 199, cysteine 202, and cysteine 205 together coordinate Zn(2+).

This sequence belongs to the QueC family. Requires Zn(2+) as cofactor.

It catalyses the reaction 7-carboxy-7-deazaguanine + NH4(+) + ATP = 7-cyano-7-deazaguanine + ADP + phosphate + H2O + H(+). Its pathway is purine metabolism; 7-cyano-7-deazaguanine biosynthesis. Functionally, catalyzes the ATP-dependent conversion of 7-carboxy-7-deazaguanine (CDG) to 7-cyano-7-deazaguanine (preQ(0)). The chain is 7-cyano-7-deazaguanine synthase from Synechococcus sp. (strain CC9311).